The sequence spans 120 residues: Large ribosomal subunit protein bL19 (120 aa).

This sequence belongs to the bacterial ribosomal protein bL19 family.

In terms of biological role, this protein is located at the 30S-50S ribosomal subunit interface and may play a role in the structure and function of the aminoacyl-tRNA binding site. The protein is Large ribosomal subunit protein bL19 of Kocuria rhizophila (strain ATCC 9341 / DSM 348 / NBRC 103217 / DC2201).